Reading from the N-terminus, the 405-residue chain is tRNA N6-adenosine threonylcarbamoyltransferase, mitochondrial (405 aa).

A mitochondrion-targeting transit peptide spans 1–19 (MAKYISNLSRIAVVRGRVS). Residues His138 and His142 each contribute to the a divalent metal cation site. Substrate contacts are provided by residues 160–164 (LISGG), Asp193, Gly213, Glu217, 320–321 (SN), and Thr348. Position 349 (Asp349) interacts with a divalent metal cation.

This sequence belongs to the KAE1 / TsaD family. Monomer. It depends on a divalent metal cation as a cofactor.

Its subcellular location is the mitochondrion. The enzyme catalyses L-threonylcarbamoyladenylate + adenosine(37) in tRNA = N(6)-L-threonylcarbamoyladenosine(37) in tRNA + AMP + H(+). Functionally, required for the formation of a threonylcarbamoyl group on adenosine at position 37 (t(6)A37) in mitochondrial tRNAs that read codons beginning with adenine. Probably involved in the transfer of the threonylcarbamoyl moiety of threonylcarbamoyl-AMP (TC-AMP) to the N6 group of A37. Involved in mitochondrial genome maintenance. This chain is tRNA N6-adenosine threonylcarbamoyltransferase, mitochondrial, found in Xenopus tropicalis (Western clawed frog).